A 325-amino-acid polypeptide reads, in one-letter code: Lactonase drp35 (325 aa).

Residues glutamate 46, threonine 108, glycine 110, aspartate 128, threonine 131, tyrosine 133, aspartate 136, asparagine 183, aspartate 234, and serine 235 each coordinate Ca(2+). Aspartate 234 serves as the catalytic Proton donor.

The protein belongs to the SMP-30/CGR1 family. Ca(2+) serves as cofactor.

It is found in the cytoplasm. Its function is as follows. Exhibits lactonase activity. Acts in cells with perturbed membrane integrity and is possibly related to the membrane homeostasis. The polypeptide is Lactonase drp35 (drp35) (Staphylococcus epidermidis (strain ATCC 35984 / DSM 28319 / BCRC 17069 / CCUG 31568 / BM 3577 / RP62A)).